We begin with the raw amino-acid sequence, 161 residues long: E3 ubiquitin ligase complex SCF subunit sconC (161 aa).

An interaction with the F-box domain of F-box proteins region spans residues 102 to 161 (ILAANYLDIKPLLDIGCKTVANMIKGKSPEEIRKTFNIQNDFTPEEEDQIRRENEWAEDR).

The protein belongs to the SKP1 family. As to quaternary structure, component of the SCF (SKP1-CUL1-F-box protein) E3 ubiquitin ligase complexes.

It functions in the pathway protein modification; protein ubiquitination. Essential component of the SCF (SKP1-CUL1-F-box protein) E3 ubiquitin ligase complexes, which mediate the ubiquitination and subsequent proteasomal degradation of target proteins. Controls sulfur metabolite repression, probably by mediating the inactivation or degradation of the metR transcription factor. This Emericella nidulans (strain FGSC A4 / ATCC 38163 / CBS 112.46 / NRRL 194 / M139) (Aspergillus nidulans) protein is E3 ubiquitin ligase complex SCF subunit sconC (sconC).